The following is a 325-amino-acid chain: Ribose-phosphate pyrophosphokinase 4 (325 aa).

Mg(2+) is bound by residues D145 and H147. Positions 228–243 are binding of phosphoribosylpyrophosphate; the sequence is GRHVVIVDDLVQSGGT.

This sequence belongs to the ribose-phosphate pyrophosphokinase family. The cofactor is Mg(2+).

It catalyses the reaction D-ribose 5-phosphate + ATP = 5-phospho-alpha-D-ribose 1-diphosphate + AMP + H(+). This is Ribose-phosphate pyrophosphokinase 4 from Oryza sativa subsp. japonica (Rice).